The primary structure comprises 120 residues: Large ribosomal subunit protein bL19 (120 aa).

Belongs to the bacterial ribosomal protein bL19 family.

Functionally, this protein is located at the 30S-50S ribosomal subunit interface and may play a role in the structure and function of the aminoacyl-tRNA binding site. This chain is Large ribosomal subunit protein bL19, found in Picosynechococcus sp. (strain ATCC 27264 / PCC 7002 / PR-6) (Agmenellum quadruplicatum).